The sequence spans 160 residues: 6,7-dimethyl-8-ribityllumazine synthase (160 aa).

5-amino-6-(D-ribitylamino)uracil is bound by residues Phe32, 66 to 68 (ALE), and 90 to 92 (CII). 95–96 (ET) provides a ligand contact to (2S)-2-hydroxy-3-oxobutyl phosphate. The active-site Proton donor is the His98. 5-amino-6-(D-ribitylamino)uracil is bound at residue Asn123. Arg137 contacts (2S)-2-hydroxy-3-oxobutyl phosphate.

Belongs to the DMRL synthase family.

The catalysed reaction is (2S)-2-hydroxy-3-oxobutyl phosphate + 5-amino-6-(D-ribitylamino)uracil = 6,7-dimethyl-8-(1-D-ribityl)lumazine + phosphate + 2 H2O + H(+). The protein operates within cofactor biosynthesis; riboflavin biosynthesis; riboflavin from 2-hydroxy-3-oxobutyl phosphate and 5-amino-6-(D-ribitylamino)uracil: step 1/2. Catalyzes the formation of 6,7-dimethyl-8-ribityllumazine by condensation of 5-amino-6-(D-ribitylamino)uracil with 3,4-dihydroxy-2-butanone 4-phosphate. This is the penultimate step in the biosynthesis of riboflavin. This chain is 6,7-dimethyl-8-ribityllumazine synthase, found in Methylibium petroleiphilum (strain ATCC BAA-1232 / LMG 22953 / PM1).